Reading from the N-terminus, the 786-residue chain is Spermatogenesis-associated protein 20 (786 aa).

Residues 1 to 22 (MLGARAWLGRVLLLPRAGAGLA) form the signal peptide. Residues 23 to 61 (ASRRGSSSRDKDRSATVSSSVPMPAGGKGSHPSSTPQRV) are disordered. S649 carries the post-translational modification Phosphoserine.

The protein localises to the secreted. Its function is as follows. May play a role in fertility regulation. The protein is Spermatogenesis-associated protein 20 (SPATA20) of Homo sapiens (Human).